Consider the following 259-residue polypeptide: Exosome complex component Rrp42 (259 aa).

Belongs to the RNase PH family. Rrp42 subfamily. As to quaternary structure, component of the archaeal exosome complex. Forms a hexameric ring-like arrangement composed of 3 Rrp41-Rrp42 heterodimers. The hexameric ring associates with a trimer of Rrp4 and/or Csl4 subunits.

Its subcellular location is the cytoplasm. In terms of biological role, non-catalytic component of the exosome, which is a complex involved in RNA degradation. Contributes to the structuring of the Rrp41 active site. The protein is Exosome complex component Rrp42 of Archaeoglobus fulgidus (strain ATCC 49558 / DSM 4304 / JCM 9628 / NBRC 100126 / VC-16).